We begin with the raw amino-acid sequence, 261 residues long: LIM and SH3 domain protein 1 (261 aa).

Methionine 1 bears the N-acetylmethionine mark. Residues cysteine 5–histidine 56 enclose the LIM zinc-binding domain. An N6-acetyllysine modification is found at lysine 42. Nebulin repeat units lie at residues serine 61–glycine 95 and glycine 97–methionine 131. Threonine 68 is modified (phosphothreonine). At lysine 75 the chain carries N6-methyllysine. At serine 99 the chain carries Phosphoserine. Residue threonine 104 is modified to Phosphothreonine. Positions lysine 111–tyrosine 186 are disordered. Lysine 112 is subject to N6-succinyllysine. Serine 118 is subject to Phosphoserine. Residues lysine 121–arginine 130 are compositionally biased toward basic and acidic residues. A phosphoserine mark is found at serine 134 and serine 146. The span at serine 167–tyrosine 183 shows a compositional bias: low complexity. In terms of domain architecture, SH3 spans glycine 202–isoleucine 261.

As to quaternary structure, interacts with F-actin. Interacts with ANKRD54. Interacts with KBTBD10.

It localises to the cytoplasm. It is found in the cell cortex. The protein localises to the cytoskeleton. Functionally, plays an important role in the regulation of dynamic actin-based, cytoskeletal activities. Agonist-dependent changes in LASP1 phosphorylation may also serve to regulate actin-associated ion transport activities, not only in the parietal cell but also in certain other F-actin-rich secretory epithelial cell types. The chain is LIM and SH3 domain protein 1 (LASP1) from Homo sapiens (Human).